The sequence spans 239 residues: tRNA (guanine-N(1)-)-methyltransferase (239 aa).

S-adenosyl-L-methionine-binding positions include glycine 108 and 128–133 (VGNFIV).

This sequence belongs to the RNA methyltransferase TrmD family. In terms of assembly, homodimer.

The protein localises to the cytoplasm. The catalysed reaction is guanosine(37) in tRNA + S-adenosyl-L-methionine = N(1)-methylguanosine(37) in tRNA + S-adenosyl-L-homocysteine + H(+). In terms of biological role, specifically methylates guanosine-37 in various tRNAs. In Helicobacter hepaticus (strain ATCC 51449 / 3B1), this protein is tRNA (guanine-N(1)-)-methyltransferase.